Reading from the N-terminus, the 214-residue chain is Adenylate kinase (214 aa).

10 to 15 (GAGKGT) is a binding site for ATP. An NMP region spans residues 30–59 (STGDMLRAAVKAGTPLGLEAKKVMDAGQLV). AMP is bound by residues T31, R36, 57 to 59 (QLV), 85 to 88 (GFPR), and Q92. The interval 122–159 (GRRVHSGSGRVYHVVFNPPKVEGKDDVTGEDLSIRPDD) is LID. ATP is bound by residues R123 and 132 to 133 (VY). Residues R156 and R167 each coordinate AMP. Residue Q200 participates in ATP binding.

This sequence belongs to the adenylate kinase family. In terms of assembly, monomer.

Its subcellular location is the cytoplasm. It carries out the reaction AMP + ATP = 2 ADP. The protein operates within purine metabolism; AMP biosynthesis via salvage pathway; AMP from ADP: step 1/1. Catalyzes the reversible transfer of the terminal phosphate group between ATP and AMP. Plays an important role in cellular energy homeostasis and in adenine nucleotide metabolism. This is Adenylate kinase from Shewanella denitrificans (strain OS217 / ATCC BAA-1090 / DSM 15013).